We begin with the raw amino-acid sequence, 283 residues long: Diphthine methyl ester synthase (283 aa).

Residues L9, D84, G87, 112 to 113 (SI), L163, M221, and H246 each bind S-adenosyl-L-methionine.

It belongs to the diphthine synthase family.

The protein localises to the cytoplasm. It carries out the reaction 2-[(3S)-amino-3-carboxypropyl]-L-histidyl-[translation elongation factor 2] + 4 S-adenosyl-L-methionine = diphthine methyl ester-[translation elongation factor 2] + 4 S-adenosyl-L-homocysteine + 3 H(+). Its pathway is protein modification; peptidyl-diphthamide biosynthesis. Its function is as follows. S-adenosyl-L-methionine-dependent methyltransferase that catalyzes four methylations of the modified target histidine residue in translation elongation factor 2 (EF-2), to form an intermediate called diphthine methyl ester. The four successive methylation reactions represent the second step of diphthamide biosynthesis. The protein is Diphthine methyl ester synthase (dph5) of Schizosaccharomyces pombe (strain 972 / ATCC 24843) (Fission yeast).